The primary structure comprises 107 residues: MSRHQFDLIMCLKQPGVQTGLLCEKCDGKCPICDSYVRPKRKVRVCENCSFGKQAKNCIICNLNVGVNDAFYCWECCRLGKDKDGCPRILNLGSNRLDRHFEKKKKV.

It belongs to the PHF5 family. In terms of assembly, component of the spliceosome where it interacts with CUS1, HSH49, HSH155, IST3 and RSE1. Also interacts with YRA1.

It localises to the nucleus. Required for pre-mRNA splicing. Involved in regulation of drug sensitivity and may play a role in multidrug resistance. This chain is Pre-mRNA-splicing factor RDS3 (RDS3), found in Saccharomyces cerevisiae (strain ATCC 204508 / S288c) (Baker's yeast).